The chain runs to 262 residues: Methylthioribulose-1-phosphate dehydratase (262 aa).

Residue C115 participates in substrate binding. H133 and H135 together coordinate Zn(2+). The active-site Proton donor/acceptor is E158. Zn(2+) is bound at residue H223.

It belongs to the aldolase class II family. MtnB subfamily. Zn(2+) is required as a cofactor.

It localises to the cytoplasm. It carries out the reaction 5-(methylsulfanyl)-D-ribulose 1-phosphate = 5-methylsulfanyl-2,3-dioxopentyl phosphate + H2O. It participates in amino-acid biosynthesis; L-methionine biosynthesis via salvage pathway; L-methionine from S-methyl-5-thio-alpha-D-ribose 1-phosphate: step 2/6. Catalyzes the dehydration of methylthioribulose-1-phosphate (MTRu-1-P) into 2,3-diketo-5-methylthiopentyl-1-phosphate (DK-MTP-1-P). The polypeptide is Methylthioribulose-1-phosphate dehydratase (Meyerozyma guilliermondii (strain ATCC 6260 / CBS 566 / DSM 6381 / JCM 1539 / NBRC 10279 / NRRL Y-324) (Yeast)).